The following is a 256-amino-acid chain: Hydroxyethylthiazole kinase (256 aa).

M38 lines the substrate pocket. ATP contacts are provided by R114 and T159. G186 is a substrate binding site.

Belongs to the Thz kinase family. Mg(2+) serves as cofactor.

The enzyme catalyses 5-(2-hydroxyethyl)-4-methylthiazole + ATP = 4-methyl-5-(2-phosphooxyethyl)-thiazole + ADP + H(+). The protein operates within cofactor biosynthesis; thiamine diphosphate biosynthesis; 4-methyl-5-(2-phosphoethyl)-thiazole from 5-(2-hydroxyethyl)-4-methylthiazole: step 1/1. Its function is as follows. Catalyzes the phosphorylation of the hydroxyl group of 4-methyl-5-beta-hydroxyethylthiazole (THZ). The protein is Hydroxyethylthiazole kinase of Streptococcus agalactiae serotype III (strain NEM316).